Here is a 291-residue protein sequence, read N- to C-terminus: MKTGRIVKSISGVYQVDVNGERFNTKPRGLFRKKKFSPVVGDIVEFDVQNINEGYIHQVYERKNELKRPPVSNIDTLVIVMSAVEPNFSTQLLDRFLVIAHSYQLNARILVTKKDKTPIEKQFEINELLKIYENIGYETEFIGNDDDRKKIVEAWSAGLIVLSGQSGVGKSTFLNHYRPELNLETNDISKSLNRGKHTTRHVELFERQNGYIADTPGFSALDFDHIDKDEIKDYFLELNRYGETCKFRNCNHIKEPNCNVKHQLEIGNIAQFRYDHYLQLFNEISNRKVRY.

A CP-type G domain is found at 63–221 (KNELKRPPVS…IADTPGFSAL (159 aa)). GTP contacts are provided by residues 112–115 (TKKD) and 164–172 (GQSGVGKST). The Zn(2+) site is built by Cys245, Cys250, His252, and Cys258.

Belongs to the TRAFAC class YlqF/YawG GTPase family. RsgA subfamily. Monomer. Associates with 30S ribosomal subunit, binds 16S rRNA. It depends on Zn(2+) as a cofactor.

The protein localises to the cytoplasm. In terms of biological role, one of several proteins that assist in the late maturation steps of the functional core of the 30S ribosomal subunit. Helps release RbfA from mature subunits. May play a role in the assembly of ribosomal proteins into the subunit. Circularly permuted GTPase that catalyzes slow GTP hydrolysis, GTPase activity is stimulated by the 30S ribosomal subunit. The chain is Small ribosomal subunit biogenesis GTPase RsgA from Staphylococcus aureus (strain MRSA252).